The following is a 349-amino-acid chain: Phosphoribosylformylglycinamidine cyclo-ligase (349 aa).

The protein belongs to the AIR synthase family.

It is found in the cytoplasm. The catalysed reaction is 2-formamido-N(1)-(5-O-phospho-beta-D-ribosyl)acetamidine + ATP = 5-amino-1-(5-phospho-beta-D-ribosyl)imidazole + ADP + phosphate + H(+). The protein operates within purine metabolism; IMP biosynthesis via de novo pathway; 5-amino-1-(5-phospho-D-ribosyl)imidazole from N(2)-formyl-N(1)-(5-phospho-D-ribosyl)glycinamide: step 2/2. This chain is Phosphoribosylformylglycinamidine cyclo-ligase, found in Bordetella pertussis (strain Tohama I / ATCC BAA-589 / NCTC 13251).